Consider the following 956-residue polypeptide: DNA repair endonuclease UVH1 (956 aa).

The Nuclear localization signal signature appears at 256 to 272 (RRQLDPIWHTLGKRTKQ). 3 disordered regions span residues 343–363 (HVKN…SVEA), 516–593 (TTDM…RPSG), and 697–718 (SSTE…GGRK). A compositionally biased stretch (polar residues) spans 697–711 (SSTEFPASSTQNSLT). In terms of domain architecture, ERCC4 spans 725–805 (QVIVDMREFM…IPVLLIEFSQ (81 aa)).

This sequence belongs to the XPF family. In terms of assembly, heterodimer with ERCC1/RAD10. In terms of tissue distribution, isoform 1 and isoform 2 are widely expressed, predominantly in flowers, meristems and stems. Isoform 3 is detected at low levels.

It localises to the nucleus. Its function is as follows. Seems to be involved in nucleotide excision repair (NER) of damaged DNA (dark repair mechanism). Involved in repair of UV light, and probably oxidative damage. The UVH1/RAD1-ERCC1/RAD10 complex may act as an endonuclease making DNA incision 5' to the lesion site. In vitro, is implicated in double strand breaks (DSBs) repair and is required for homologous recombination in the presence of non-homologous overhangs. May mediate the induction of a DNA-damage sensitive cell-cycle checkpoint during the G2 phase. The polypeptide is DNA repair endonuclease UVH1 (UVH1) (Arabidopsis thaliana (Mouse-ear cress)).